A 1409-amino-acid chain; its full sequence is DNA-directed RNA polymerase subunit beta' (1409 aa).

C69, C71, C84, and C87 together coordinate Zn(2+). Mg(2+)-binding residues include D461, D463, and D465. Zn(2+) contacts are provided by C805, C879, C886, and C889.

It belongs to the RNA polymerase beta' chain family. As to quaternary structure, the RNAP catalytic core consists of 2 alpha, 1 beta, 1 beta' and 1 omega subunit. When a sigma factor is associated with the core the holoenzyme is formed, which can initiate transcription. It depends on Mg(2+) as a cofactor. Zn(2+) is required as a cofactor.

The enzyme catalyses RNA(n) + a ribonucleoside 5'-triphosphate = RNA(n+1) + diphosphate. In terms of biological role, DNA-dependent RNA polymerase catalyzes the transcription of DNA into RNA using the four ribonucleoside triphosphates as substrates. This is DNA-directed RNA polymerase subunit beta' from Anaplasma phagocytophilum (strain HZ).